Consider the following 279-residue polypeptide: Thymidylate synthase (279 aa).

133 to 134 (RR) lines the dUMP pocket. Cys154 acts as the Nucleophile in catalysis. DUMP is bound by residues 178–181 (RSND), Asn189, and 219–221 (HIY). (6R)-5,10-methylene-5,6,7,8-tetrahydrofolate is bound at residue Asp181. Residue Ala278 participates in (6R)-5,10-methylene-5,6,7,8-tetrahydrofolate binding.

This sequence belongs to the thymidylate synthase family. Bacterial-type ThyA subfamily. As to quaternary structure, homodimer.

It localises to the cytoplasm. The enzyme catalyses dUMP + (6R)-5,10-methylene-5,6,7,8-tetrahydrofolate = 7,8-dihydrofolate + dTMP. The protein operates within pyrimidine metabolism; dTTP biosynthesis. Its function is as follows. Catalyzes the reductive methylation of 2'-deoxyuridine-5'-monophosphate (dUMP) to 2'-deoxythymidine-5'-monophosphate (dTMP) while utilizing 5,10-methylenetetrahydrofolate (mTHF) as the methyl donor and reductant in the reaction, yielding dihydrofolate (DHF) as a by-product. This enzymatic reaction provides an intracellular de novo source of dTMP, an essential precursor for DNA biosynthesis. The chain is Thymidylate synthase from Streptococcus mutans serotype c (strain ATCC 700610 / UA159).